We begin with the raw amino-acid sequence, 471 residues long: ATP synthase subunit beta (471 aa).

154-161 (GGAGVGKT) contributes to the ATP binding site.

This sequence belongs to the ATPase alpha/beta chains family. As to quaternary structure, F-type ATPases have 2 components, CF(1) - the catalytic core - and CF(0) - the membrane proton channel. CF(1) has five subunits: alpha(3), beta(3), gamma(1), delta(1), epsilon(1). CF(0) has three main subunits: a(1), b(2) and c(9-12). The alpha and beta chains form an alternating ring which encloses part of the gamma chain. CF(1) is attached to CF(0) by a central stalk formed by the gamma and epsilon chains, while a peripheral stalk is formed by the delta and b chains.

It localises to the cell membrane. It catalyses the reaction ATP + H2O + 4 H(+)(in) = ADP + phosphate + 5 H(+)(out). Produces ATP from ADP in the presence of a proton gradient across the membrane. The catalytic sites are hosted primarily by the beta subunits. This is ATP synthase subunit beta from Mesomycoplasma hyopneumoniae (strain J / ATCC 25934 / NCTC 10110) (Mycoplasma hyopneumoniae).